The primary structure comprises 348 residues: Galanin receptor type 1 (348 aa).

Residues 1–34 (MELAMVNLSEGNGSDPEPPAPESRPLFGIGVENF) are Extracellular-facing. N-linked (GlcNAc...) asparagine glycans are attached at residues asparagine 7 and asparagine 12. The helical transmembrane segment at 35–55 (ITLVVFGLIFAMGVLGNSLVI) threads the bilayer. Over 56–70 (TVLARSKPGKPRSTT) the chain is Cytoplasmic. A helical membrane pass occupies residues 71–91 (NLFILNLSIADLAYLLFCIPF). Topologically, residues 92–109 (QATVYALPTWVLGAFICK) are extracellular. Cysteine 108 and cysteine 186 are joined by a disulfide. A helical transmembrane segment spans residues 110 to 131 (FIHYFFTVSMLVSIFTLAAMSV). Residues 132–151 (DRYVAIVHSRRSSSLRVSRN) lie on the Cytoplasmic side of the membrane. The chain crosses the membrane as a helical span at residues 152–172 (ALLGVGFIWALSIAMASPVAY). The Extracellular portion of the chain corresponds to 173-197 (HQRLFHRDSNQTFCWEQWPNKLHKK). An N-linked (GlcNAc...) asparagine glycan is attached at asparagine 182. A helical membrane pass occupies residues 198-218 (AYVVCTFVFGYLLPLLLICFC). At 219 to 247 (YAKVLNHLHKKLKNMSKKSEASKKKTAQT) the chain is on the cytoplasmic side. A helical membrane pass occupies residues 248–268 (VLVVVVVFGISWLPHHVVHLW). Residues 269–270 (AE) lie on the Extracellular side of the membrane. A helical transmembrane segment spans residues 271 to 291 (FGAFPLTPASFFFRITAHCLA). Topologically, residues 292 to 348 (YSNSSVNPIIYAFLSENFRKAYKQVFKCHVCDESPRSETKENKSRMDTPPSTNCTHV) are cytoplasmic. Cysteine 319 carries S-palmitoyl cysteine lipidation. Residues 328-337 (SETKENKSRM) show a composition bias toward basic and acidic residues. The segment at 328–348 (SETKENKSRMDTPPSTNCTHV) is disordered.

This sequence belongs to the G-protein coupled receptor 1 family. Interacts with GRP39 AND HTR1A. Three cysteine residues are found in the C-terminus, at least one of which may be palmitoylated. Expression is detected in brain, spinal cord, heart and skeletal muscle.

It localises to the cell membrane. Receptor for the hormone galanin. The activity of this receptor is mediated by G proteins that inhibit adenylate cyclase activity. The protein is Galanin receptor type 1 (Galr1) of Mus musculus (Mouse).